Consider the following 485-residue polypeptide: GlcNAc-binding protein A (485 aa).

An N-terminal signal peptide occupies residues 1 to 29 (MKKQPQKTLLAIALSVVSGTAMSHGYVSA). The Chitin-binding type-4 domain occupies 30–200 (VENGVAEARV…SFYNVIDVKF (171 aa)). Residues 437 to 478 (ADTKVLASDGAIYQCKPFPYSGYCVQWTPTATQYQPGTGSHW) form the Chitin-binding type-3 domain.

The protein belongs to the GbpA family.

It is found in the secreted. Probably interacts with GlcNAc residues. May promote attachment to both epithelial cell surfaces and chitin. This is GlcNAc-binding protein A from Vibrio vulnificus (strain CMCP6).